Consider the following 268-residue polypeptide: Imidazole glycerol phosphate synthase subunit HisF (268 aa).

Residues Asp-12 and Asp-131 contribute to the active site.

It belongs to the HisA/HisF family. As to quaternary structure, heterodimer of HisH and HisF.

Its subcellular location is the cytoplasm. It catalyses the reaction 5-[(5-phospho-1-deoxy-D-ribulos-1-ylimino)methylamino]-1-(5-phospho-beta-D-ribosyl)imidazole-4-carboxamide + L-glutamine = D-erythro-1-(imidazol-4-yl)glycerol 3-phosphate + 5-amino-1-(5-phospho-beta-D-ribosyl)imidazole-4-carboxamide + L-glutamate + H(+). The protein operates within amino-acid biosynthesis; L-histidine biosynthesis; L-histidine from 5-phospho-alpha-D-ribose 1-diphosphate: step 5/9. Its function is as follows. IGPS catalyzes the conversion of PRFAR and glutamine to IGP, AICAR and glutamate. The HisF subunit catalyzes the cyclization activity that produces IGP and AICAR from PRFAR using the ammonia provided by the HisH subunit. In Salinibacter ruber (strain DSM 13855 / M31), this protein is Imidazole glycerol phosphate synthase subunit HisF.